The sequence spans 104 residues: MYAIIETGGKQYWVKPGQNLQVERLNAEVGANVEVKVLWANDAEGTSADAKAGTDSAKVTAQVVRHLRGKKIIIFKKRPKKGYERTQGHRQDLSEIKITDIKIG.

The protein belongs to the bacterial ribosomal protein bL21 family. Part of the 50S ribosomal subunit. Contacts protein L20.

This protein binds to 23S rRNA in the presence of protein L20. The protein is Large ribosomal subunit protein bL21 of Elusimicrobium minutum (strain Pei191).